A 186-amino-acid polypeptide reads, in one-letter code: Ribosome-recycling factor (186 aa).

The protein belongs to the RRF family.

Its subcellular location is the cytoplasm. In terms of biological role, responsible for the release of ribosomes from messenger RNA at the termination of protein biosynthesis. May increase the efficiency of translation by recycling ribosomes from one round of translation to another. The protein is Ribosome-recycling factor of Bartonella bacilliformis (strain ATCC 35685 / KC583 / Herrer 020/F12,63).